A 186-amino-acid polypeptide reads, in one-letter code: uncharacterized protein (186 aa).

Positions 1 to 18 are cleaved as a signal peptide; the sequence is MNKFLFAAALIVSGLLVG. Residue Cys19 is the site of N-palmitoyl cysteine attachment. A lipid anchor (S-diacylglycerol cysteine) is attached at Cys19.

The protein resides in the cell membrane. This is an uncharacterized protein from Escherichia coli (strain K12).